A 195-amino-acid chain; its full sequence is Protein SYM1 (195 aa).

Helical transmembrane passes span 21–39, 55–71, 98–115, and 159–175; these read GIMT…QVGF, AVVY…DSWY, LLFA…MSIL, and LFSV…FLSF.

The protein belongs to the peroxisomal membrane protein PXMP2/4 family.

Its subcellular location is the mitochondrion inner membrane. Functionally, may be involved in cellular response to stress. Required to maintain mitochondrial DNA (mtDNA) integrity and stability. This is Protein SYM1 (SYM1) from Kluyveromyces lactis (strain ATCC 8585 / CBS 2359 / DSM 70799 / NBRC 1267 / NRRL Y-1140 / WM37) (Yeast).